The sequence spans 152 residues: UPF0260 protein BAB1_1496 (152 aa).

It belongs to the UPF0260 family.

The polypeptide is UPF0260 protein BAB1_1496 (Brucella abortus (strain 2308)).